The sequence spans 86 residues: Large ribosomal subunit protein uL23 (86 aa).

This sequence belongs to the universal ribosomal protein uL23 family. In terms of assembly, part of the 50S ribosomal subunit. Contacts protein L29.

Binds to 23S rRNA. One of the proteins that surrounds the polypeptide exit tunnel on the outside of the ribosome. The protein is Large ribosomal subunit protein uL23 of Methanococcus aeolicus (strain ATCC BAA-1280 / DSM 17508 / OCM 812 / Nankai-3).